A 553-amino-acid chain; its full sequence is Glycerol kinase 3 (553 aa).

Residue T20 coordinates substrate. R24 lines the ATP pocket. Substrate contacts are provided by R94, Y148, and D259. Residues T281, G326, and 427–431 (GMTSN) each bind ATP.

The protein belongs to the FGGY kinase family.

It is found in the mitochondrion outer membrane. The protein localises to the cytoplasm. The enzyme catalyses glycerol + ATP = sn-glycerol 3-phosphate + ADP + H(+). It participates in polyol metabolism; glycerol degradation via glycerol kinase pathway; sn-glycerol 3-phosphate from glycerol: step 1/1. Functionally, may be involved in the regulation of glycerol uptake and metabolism. The chain is Glycerol kinase 3 from Homo sapiens (Human).